Reading from the N-terminus, the 116-residue chain is NADH-ubiquinone oxidoreductase chain 3 (116 aa).

3 helical membrane passes run 3–23 (LITT…TVSF), 56–76 (FFLI…LLPL), and 87–107 (LTLV…IYEW).

The protein belongs to the complex I subunit 3 family.

Its subcellular location is the mitochondrion membrane. It carries out the reaction a ubiquinone + NADH + 5 H(+)(in) = a ubiquinol + NAD(+) + 4 H(+)(out). Core subunit of the mitochondrial membrane respiratory chain NADH dehydrogenase (Complex I) that is believed to belong to the minimal assembly required for catalysis. Complex I functions in the transfer of electrons from NADH to the respiratory chain. The immediate electron acceptor for the enzyme is believed to be ubiquinone. In Oncorhynchus kisutch (Coho salmon), this protein is NADH-ubiquinone oxidoreductase chain 3 (MT-ND3).